The chain runs to 244 residues: Phosphonates import ATP-binding protein PhnC 2 (244 aa).

In terms of domain architecture, ABC transporter spans 3–242; it reads LRVEGLKKVY…ELTDYTVDQL (240 aa). 36-43 contacts ATP; sequence GPSGAGKS.

Belongs to the ABC transporter superfamily. Phosphonates importer (TC 3.A.1.9.1) family. In terms of assembly, the complex is composed of two ATP-binding proteins (PhnC), two transmembrane proteins (PhnE) and a solute-binding protein (PhnD).

It is found in the cell membrane. It carries out the reaction phosphonate(out) + ATP + H2O = phosphonate(in) + ADP + phosphate + H(+). In terms of biological role, part of the ABC transporter complex PhnCDE involved in phosphonates import. Responsible for energy coupling to the transport system. The protein is Phosphonates import ATP-binding protein PhnC 2 of Halalkalibacterium halodurans (strain ATCC BAA-125 / DSM 18197 / FERM 7344 / JCM 9153 / C-125) (Bacillus halodurans).